Here is a 278-residue protein sequence, read N- to C-terminus: Ras-related protein Rab-40B (278 aa).

Positions 23, 26, and 27 each coordinate GTP. The interval Ser-41–Ile-49 is switch-I. Mg(2+) is bound at residue Asp-69. GTP contacts are provided by Gly-72, Asn-126, and Arg-127. A switch-II region spans residues Gly-72–Gln-88. The region spanning Leu-175 to Ala-228 is the SOCS box domain. The segment at Ser-242 to Ser-278 is disordered. A compositionally biased stretch (basic residues) spans Thr-248 to Leu-259. Residues Pro-267–Ser-278 show a composition bias toward polar residues. Cys-270 carries S-palmitoyl cysteine lipidation. Residue Cys-275 is the site of S-geranylgeranyl cysteine attachment.

The protein belongs to the small GTPase superfamily. Rab family. In terms of assembly, component of the cullin-5-RING E3 ubiquitin-protein ligase complex (ECS(RAB40B) complex) composed of CUL5, Elongin BC (ELOB and ELOC), RNF7/RBX2 and RAB40B; RAB40B interaction with ECS complex is GTP-independent. Binds (GTP-bound) LIMA1; interaction promotes LIMA1 subcellular localization in lamellipodia during cell migration. Interacts (GTP-bound) with TKS5/SH3PXD2A (via PX domain); interaction promotes invadopodia-mediated extracellular matrix degradation. Mg(2+) serves as cofactor.

Its subcellular location is the cell membrane. It localises to the cytoplasm. The protein resides in the cytosol. It is found in the cell projection. The protein localises to the lamellipodium membrane. Its subcellular location is the ruffle. The enzyme catalyses GTP + H2O = GDP + phosphate + H(+). Its pathway is protein modification; protein ubiquitination. Regulated by guanine nucleotide exchange factors (GEFs) which promote the exchange of bound GDP for free GTP. Regulated by GTPase activating proteins (GAPs) which increase the GTP hydrolysis activity. Inhibited by GDP dissociation inhibitors (GDIs). Its function is as follows. RAB40B small GTPase acts as substrate-recognition components of the ECS(RAB40B) E3 ubiquitin ligase complex which mediates the ubiquitination of target proteins. The Rab40 subfamily belongs to the Rab family that are key regulators of intracellular membrane trafficking, from the formation of transport vesicles to their fusion with membranes. Rabs cycle between an inactive GDP-bound form and an active GTP-bound form that is able to recruit to membranes different sets of downstream effectors directly responsible for vesicle formation, movement, tethering and fusion. As part of the ECS(RAB40B) complex, GTP-bound RAB40B promotes LIMA1/EPLIN ubiquitination and degradation, thereby regulating leading-edge actin dynamics during cell migration. As part of the ECS(RAB40B) complex, GTP-bound RAB40B also ubiquitinates RAP2A GTPase which promotes its localization to lamellipodia and activation to drive cell migration. The ECS(RAB40B) complex does not mediate canonical ubiquitin-dependent degradation of RAP2. RAB40B also binds TKS5/SH3PXD2A effector independently from ECS complex to promote invadopodia-mediated extracellular matrix degradation. In Homo sapiens (Human), this protein is Ras-related protein Rab-40B.